The chain runs to 437 residues: Aromatic peroxidase fscJ (437 aa).

An N-terminal signal peptide occupies residues 1 to 19; sequence MKWLHLLSVVACVADEVYA. Position 83 (Cys83) interacts with heme.

Belongs to the chloroperoxidase family. Heme b serves as cofactor.

The protein operates within secondary metabolite biosynthesis. In terms of biological role, aromatic peroxidase; part of the fragmented gene cluster that mediates the biosynthesis of fusarochromene, a tryptophan-derived metabolite closely related to a group of mycotoxins including fusarochromanone. The role of fscJ within the pathway has not been identified yet. The first step of the pathway is the epimerization of L-tryptophan to D-tryptophan in the presence of the NRPS-like tryptophan epimerase fscC. D-tryptophan is subsequently hydroxylated by the tryptophan 6-hydroxylase fscE to yield 6-hydroxytryptophan. The pyrrole ring undergoes cleavaged by the tryptophan 2,3-dioxygenase fscD and is finally converted to 4-hydroxykyrunenine by the hydrolase fscH. The NRPS-like oxidoreductase fscA reduces the carboxyl group to primary alcohol and the DMATS-type prenyltransferase fscG performs prenylation, followed by the formation of a chromene ring catalyzed by the oxidoreductase fscI, which leads to desacetylfusarochromene. Epoxidation by fscF and rearrangement reactions of chromene double bonds convert compound desacetylfusarochromene to fusarochromanones. Although specific acetyltransferases were not found near the fsc gene cluster, several predicted enzymes containing the N-acetyltransferase superfamily domain are present in the genome of F.equiseti. These predicted enzymes may have the potential to convert desacetylfusarochromene to fusarochromene. This is Aromatic peroxidase fscJ from Fusarium equiseti (Fusarium scirpi).